The following is a 225-amino-acid chain: UPF0758 protein BCQ_4241 (225 aa).

The 123-residue stretch at 103-225 folds into the MPN domain; that stretch reads SIRSPEDCAR…FVSLKEKGHI (123 aa). The Zn(2+) site is built by His174, His176, and Asp187. Residues 174-187 carry the JAMM motif motif; sequence HNHPSGDPAPSRED.

This sequence belongs to the UPF0758 family.

This chain is UPF0758 protein BCQ_4241, found in Bacillus cereus (strain Q1).